The chain runs to 285 residues: Dioxygenase andF (285 aa).

Residues His-128, Asp-130, and His-205 each contribute to the Fe cation site.

It belongs to the PhyH family. As to quaternary structure, homodimer. It depends on Fe cation as a cofactor.

It functions in the pathway secondary metabolite biosynthesis; terpenoid biosynthesis. Functionally, dioxygenase; part of the gene cluster that mediates the biosynthesis of anditomin, a fungal meroterpenoid. The first step of the pathway is the synthesis of 3,5-dimethylorsellinic acid (DMOA) by the polyketide synthase andM. DMOA is then converted to the phthalide compound 5,7-dihydroxy-4,6-dimethylphthalide (DHDMP) by the cytochrome P450 monooxygenase andK, which is further prenylated by the prenyltransferase andD to yield farnesyl-DHDMP. Further epoxidation by the FAD-dependent monooxygenase andE leads to epoxyfarnesyl-DHDMP. The next step involves the terpene cyclase andB that converts epoxyfarnesyl-DHDMP into preandiloid A through opening of the epoxide ring followed by the cyclization of the farnesyl moiety. Preandiloid A is in turn oxidized at the C-3 hydroxyl group to yield preandiloid B by the dehydrogenase andC. The dioxygenase andA is solely responsible for the dehydrogenation of preandiloid B leading to the enone preandiloid C, as well as for the intriguing structural rearrangement to generate the bicyclo[2.2.2]octane core, transforming preandiloid C into andiconin. FAD-binding monooxygenase andJ then produces andilesin D which is reduced by dehydrogenase andI to yield andilesin A. Action of acetyltransferase andG followed by a spontaneous acetate elimination leads then to andilesin B, which is in turn substrate of the short chain dehydrogenase andH to yield andilesin C. Finally, the dioxygenase andF catalyzes the transformation of andilesin C to anditomin. This Emericella variicolor (Aspergillus stellatus) protein is Dioxygenase andF.